Consider the following 91-residue polypeptide: Putative pterin-4-alpha-carbinolamine dehydratase (91 aa).

The protein belongs to the pterin-4-alpha-carbinolamine dehydratase family.

It catalyses the reaction (4aS,6R)-4a-hydroxy-L-erythro-5,6,7,8-tetrahydrobiopterin = (6R)-L-erythro-6,7-dihydrobiopterin + H2O. This Halobacterium salinarum (strain ATCC 29341 / DSM 671 / R1) protein is Putative pterin-4-alpha-carbinolamine dehydratase.